A 416-amino-acid chain; its full sequence is Gamma-glutamyl phosphate reductase (416 aa).

The protein belongs to the gamma-glutamyl phosphate reductase family.

The protein localises to the cytoplasm. It carries out the reaction L-glutamate 5-semialdehyde + phosphate + NADP(+) = L-glutamyl 5-phosphate + NADPH + H(+). Its pathway is amino-acid biosynthesis; L-proline biosynthesis; L-glutamate 5-semialdehyde from L-glutamate: step 2/2. Its function is as follows. Catalyzes the NADPH-dependent reduction of L-glutamate 5-phosphate into L-glutamate 5-semialdehyde and phosphate. The product spontaneously undergoes cyclization to form 1-pyrroline-5-carboxylate. The sequence is that of Gamma-glutamyl phosphate reductase from Actinobacillus succinogenes (strain ATCC 55618 / DSM 22257 / CCUG 43843 / 130Z).